Consider the following 288-residue polypeptide: MAVAQCPASCGELIQGWILGSEKLVSCPVEWYSTVEVTSGSPLTDERPLSRAMVDRLLQHWQYPAHLSQDIRIDVQSTIPIAKGMASSTADIAATAIAAAHYLGHQLDEPTLAQLCVSLEPTDSTVFRKLTLFDHNNASTQIGCEAQPQLDLLVLESPETLRTADYHRIPRHSGLQAGAAALQRAWEKVQEACISQNPYRLGEAATLSAIASQLLLPKPDFDSLLALVEECDLYGVNVAHSGSVVGLMLDRNRHDVDYIKWMLTQKKLTIHWPEQHLLRMVTGGVELQ.

80–90 is an ATP binding site; it reads PIAKGMASSTA.

The protein belongs to the GHMP kinase family. PduX subfamily.

It localises to the cytoplasm. The enzyme catalyses L-threonine + ATP = O-phospho-L-threonine + ADP + H(+). Its pathway is cofactor biosynthesis; adenosylcobalamin biosynthesis. It participates in polyol metabolism; 1,2-propanediol degradation. In terms of biological role, L-threonine kinase that catalyzes the conversion of L-threonine to L-threonine-O-3-phosphate. Involved in the de novo synthesis of adenosylcobalamin (coenzyme B12) and the assimilation of cobyric acid. Its function is as follows. Expression of a cosmid containing the full 21-gene pdu operon in E.coli allows E.coli to grow on 1,2-propanediol (1,2-PD) with the appearance of bacterial microcompartments (BMC) in its cytoplasm. Functionally, the 1,2-PD-specific bacterial microcompartment (BMC) concentrates low levels of 1,2-PD catabolic enzymes, concentrates volatile reaction intermediates thus enhancing pathway flux and keeps the level of toxic, mutagenic propionaldehyde low. This gene probably benefits from its induction via the Pdu promoter, rather than a physical interaction with the BMC. This Citrobacter freundii protein is L-threonine kinase.